We begin with the raw amino-acid sequence, 358 residues long: Aromatic amino acid aminotransferase (358 aa).

At lysine 222 the chain carries N6-(pyridoxal phosphate)lysine.

Belongs to the class-II pyridoxal-phosphate-dependent aminotransferase family. As to quaternary structure, homodimer. It depends on pyridoxal 5'-phosphate as a cofactor.

The enzyme catalyses an aromatic L-alpha-amino acid + 2-oxoglutarate = an aromatic oxo-acid + L-glutamate. In terms of biological role, aminotransferase that catalyzes the conversion of aromatic amino acids and 2-oxoglutarate into corresponding aromatic oxo acids and L-glutamate. The chain is Aromatic amino acid aminotransferase from Mycobacterium sp. (strain KMS).